A 207-amino-acid polypeptide reads, in one-letter code: Dephospho-CoA kinase (207 aa).

The region spanning 10-207 (TLGLTGGIGS…FYLTLRGGQS (198 aa)) is the DPCK domain. 18 to 23 (GSGKSA) lines the ATP pocket.

Belongs to the CoaE family.

The protein localises to the cytoplasm. It carries out the reaction 3'-dephospho-CoA + ATP = ADP + CoA + H(+). It participates in cofactor biosynthesis; coenzyme A biosynthesis; CoA from (R)-pantothenate: step 5/5. Functionally, catalyzes the phosphorylation of the 3'-hydroxyl group of dephosphocoenzyme A to form coenzyme A. This is Dephospho-CoA kinase from Pseudomonas fluorescens (strain ATCC BAA-477 / NRRL B-23932 / Pf-5).